The primary structure comprises 365 residues: Nudix hydrolase 24, chloroplastic (365 aa).

The N-terminal 30 residues, 1–30 (MASAFCSLCPTPTSLFSSHALIPTLQWRSS), are a transit peptide targeting the chloroplast. The 142-residue stretch at 196 to 337 (GYAIHVNGYV…KDSCSLVIID (142 aa)) folds into the Nudix hydrolase domain. Residues 235–256 (GGLPHGISVCENLVKECEEEAG) carry the Nudix box motif. Mg(2+) is bound by residues Glu250 and Glu254.

It belongs to the Nudix hydrolase family. Requires Mg(2+) as cofactor. It depends on Mn(2+) as a cofactor. In terms of tissue distribution, expressed in leaves.

It is found in the plastid. The protein resides in the chloroplast. Functionally, probably mediates the hydrolysis of some nucleoside diphosphate derivatives. The sequence is that of Nudix hydrolase 24, chloroplastic (NUDT24) from Arabidopsis thaliana (Mouse-ear cress).